A 120-amino-acid chain; its full sequence is NAD(P)H-quinone oxidoreductase subunit 3, chloroplastic (120 aa).

The next 3 membrane-spanning stretches (helical) occupy residues 10–30 (LWFFLVIASIVPILAFTISEI), 64–84 (MFALVFVVFDVETVFLYPWAI), and 89–109 (LGISAFIEALLFILILMVGLV).

It belongs to the complex I subunit 3 family. NDH is composed of at least 16 different subunits, 5 of which are encoded in the nucleus.

It localises to the plastid. The protein resides in the chloroplast thylakoid membrane. It catalyses the reaction a plastoquinone + NADH + (n+1) H(+)(in) = a plastoquinol + NAD(+) + n H(+)(out). The enzyme catalyses a plastoquinone + NADPH + (n+1) H(+)(in) = a plastoquinol + NADP(+) + n H(+)(out). NDH shuttles electrons from NAD(P)H:plastoquinone, via FMN and iron-sulfur (Fe-S) centers, to quinones in the photosynthetic chain and possibly in a chloroplast respiratory chain. The immediate electron acceptor for the enzyme in this species is believed to be plastoquinone. Couples the redox reaction to proton translocation, and thus conserves the redox energy in a proton gradient. In Chara vulgaris (Common stonewort), this protein is NAD(P)H-quinone oxidoreductase subunit 3, chloroplastic.